A 222-amino-acid polypeptide reads, in one-letter code: Uracil-DNA glycosylase (222 aa).

D66 serves as the catalytic Proton acceptor.

It belongs to the uracil-DNA glycosylase (UDG) superfamily. UNG family.

It is found in the cytoplasm. The catalysed reaction is Hydrolyzes single-stranded DNA or mismatched double-stranded DNA and polynucleotides, releasing free uracil.. In terms of biological role, excises uracil residues from the DNA which can arise as a result of misincorporation of dUMP residues by DNA polymerase or due to deamination of cytosine. The sequence is that of Uracil-DNA glycosylase from Porphyromonas gingivalis (strain ATCC 33277 / DSM 20709 / CIP 103683 / JCM 12257 / NCTC 11834 / 2561).